A 141-amino-acid chain; its full sequence is Large ribosomal subunit protein uL11 (141 aa).

The protein belongs to the universal ribosomal protein uL11 family. As to quaternary structure, part of the ribosomal stalk of the 50S ribosomal subunit. Interacts with L10 and the large rRNA to form the base of the stalk. L10 forms an elongated spine to which L12 dimers bind in a sequential fashion forming a multimeric L10(L12)X complex. In terms of processing, one or more lysine residues are methylated.

Functionally, forms part of the ribosomal stalk which helps the ribosome interact with GTP-bound translation factors. The polypeptide is Large ribosomal subunit protein uL11 (Exiguobacterium sibiricum (strain DSM 17290 / CCUG 55495 / CIP 109462 / JCM 13490 / 255-15)).